We begin with the raw amino-acid sequence, 65 residues long: Small ribosomal subunit protein bS21 (65 aa).

It belongs to the bacterial ribosomal protein bS21 family.

This is Small ribosomal subunit protein bS21 from Chlorobium chlorochromatii (strain CaD3).